The chain runs to 179 residues: Large ribosomal subunit protein uL6 (179 aa).

It belongs to the universal ribosomal protein uL6 family. As to quaternary structure, part of the 50S ribosomal subunit.

Functionally, this protein binds to the 23S rRNA, and is important in its secondary structure. It is located near the subunit interface in the base of the L7/L12 stalk, and near the tRNA binding site of the peptidyltransferase center. The polypeptide is Large ribosomal subunit protein uL6 (Streptomyces avermitilis (strain ATCC 31267 / DSM 46492 / JCM 5070 / NBRC 14893 / NCIMB 12804 / NRRL 8165 / MA-4680)).